The chain runs to 271 residues: MPIITKISTQKRKGRYNIFIDNEYAFSVSERTLAERRLLKGTELSNEDIEEIKKAEADSHAIQLAMSYLSYQPRSVYEVLEYLNKHEISQDASQAAVQNLIELNYLNDNNFARLFIKNNLRVGKDGPRTVDRKLKQKGLAADIIQEALYEIEDEEWVDAGLRVVHSLIHQAGKLSYKEIKQKAWTKLRAHGFDQELSELVLEKLDLEKDEDEQIEALKKQGSKAWRRYRKDEDFKRKQKVKRYLFQHGFSSGEIDSFLNGEIVDLEEIDEY.

It belongs to the RecX family.

It is found in the cytoplasm. Modulates RecA activity. The protein is Regulatory protein RecX of Lactobacillus gasseri (strain ATCC 33323 / DSM 20243 / BCRC 14619 / CIP 102991 / JCM 1131 / KCTC 3163 / NCIMB 11718 / NCTC 13722 / AM63).